The primary structure comprises 114 residues: MVNIMDEIIVVTTPTIPGYKIIEVKGIARGGIVMATHLGRDILALLRNIKGGEVKEYTQMMAEAREEALRRMIEHAKKLGANAVVNFRFATSNVGGGMAEVYAYGTAVVVEREK.

The protein belongs to the UPF0145 family.

This Pyrococcus furiosus (strain ATCC 43587 / DSM 3638 / JCM 8422 / Vc1) protein is UPF0145 protein PF1756.